Here is a 334-residue protein sequence, read N- to C-terminus: Probable type II restriction enzyme HindVP (334 aa).

The enzyme catalyses Endonucleolytic cleavage of DNA to give specific double-stranded fragments with terminal 5'-phosphates.. Functionally, a P subtype restriction enzyme that recognizes the double-stranded sequence 5'-GRCGYC-3'; the cleavage site is unknown. This chain is Probable type II restriction enzyme HindVP (hindVRP), found in Haemophilus influenzae (strain ATCC 51907 / DSM 11121 / KW20 / Rd).